Reading from the N-terminus, the 415-residue chain is GPI mannosyltransferase 1 (415 aa).

9 consecutive transmembrane segments (helical) span residues 8–28 (PSLV…YGAW), 82–102 (FFSF…WLIA), 134–154 (TRGS…WAVL), 158–178 (ITLA…PFVY), 222–242 (LLLT…MYIL), 284–304 (FESL…PIVL), 329–349 (SQYF…SSLM), 354–374 (LGIT…QQGY), and 387–407 (GLFL…GIII).

It belongs to the PIGM family.

The protein resides in the endoplasmic reticulum membrane. Its pathway is glycolipid biosynthesis; glycosylphosphatidylinositol-anchor biosynthesis. Functionally, mannosyltransferase involved in glycosylphosphatidylinositol-anchor biosynthesis. Transfers the first alpha-1,4-mannose to GlcN-acyl-PI during GPI precursor assembly. Required for cell wall integrity. This chain is GPI mannosyltransferase 1 (gpi14), found in Aspergillus oryzae (strain ATCC 42149 / RIB 40) (Yellow koji mold).